Here is an 82-residue protein sequence, read N- to C-terminus: ATP synthase subunit c, chloroplastic (82 aa).

The next 2 helical transmembrane spans lie at 4 to 24 and 57 to 77; these read IISA…AIGP and LAFM…LLFA.

The protein belongs to the ATPase C chain family. In terms of assembly, F-type ATPases have 2 components, F(1) - the catalytic core - and F(0) - the membrane proton channel. F(1) has five subunits: alpha(3), beta(3), gamma(1), delta(1), epsilon(1). F(0) has four main subunits: a(1), b(1), b'(1) and c(10-14). The alpha and beta chains form an alternating ring which encloses part of the gamma chain. F(1) is attached to F(0) by a central stalk formed by the gamma and epsilon chains, while a peripheral stalk is formed by the delta, b and b' chains.

It is found in the plastid. Its subcellular location is the chloroplast thylakoid membrane. In terms of biological role, f(1)F(0) ATP synthase produces ATP from ADP in the presence of a proton or sodium gradient. F-type ATPases consist of two structural domains, F(1) containing the extramembraneous catalytic core and F(0) containing the membrane proton channel, linked together by a central stalk and a peripheral stalk. During catalysis, ATP synthesis in the catalytic domain of F(1) is coupled via a rotary mechanism of the central stalk subunits to proton translocation. Key component of the F(0) channel; it plays a direct role in translocation across the membrane. A homomeric c-ring of between 10-14 subunits forms the central stalk rotor element with the F(1) delta and epsilon subunits. The polypeptide is ATP synthase subunit c, chloroplastic (Thalassiosira pseudonana (Marine diatom)).